Here is a 99-residue protein sequence, read N- to C-terminus: Signal recognition particle 19 kDa protein (99 aa).

Belongs to the SRP19 family. Part of the signal recognition particle protein translocation system, which is composed of SRP and FtsY. Archaeal SRP consists of a 7S RNA molecule of 300 nucleotides and two protein subunits: SRP54 and SRP19.

The protein resides in the cytoplasm. Its function is as follows. Involved in targeting and insertion of nascent membrane proteins into the cytoplasmic membrane. Binds directly to 7S RNA and mediates binding of the 54 kDa subunit of the SRP. The polypeptide is Signal recognition particle 19 kDa protein (Ignicoccus hospitalis (strain KIN4/I / DSM 18386 / JCM 14125)).